Consider the following 236-residue polypeptide: 2-C-methyl-D-erythritol 4-phosphate cytidylyltransferase (236 aa).

It belongs to the IspD/TarI cytidylyltransferase family. IspD subfamily. As to quaternary structure, homodimer.

It carries out the reaction 2-C-methyl-D-erythritol 4-phosphate + CTP + H(+) = 4-CDP-2-C-methyl-D-erythritol + diphosphate. It participates in isoprenoid biosynthesis; isopentenyl diphosphate biosynthesis via DXP pathway; isopentenyl diphosphate from 1-deoxy-D-xylulose 5-phosphate: step 2/6. Catalyzes the formation of 4-diphosphocytidyl-2-C-methyl-D-erythritol from CTP and 2-C-methyl-D-erythritol 4-phosphate (MEP). The chain is 2-C-methyl-D-erythritol 4-phosphate cytidylyltransferase from Salmonella schwarzengrund (strain CVM19633).